A 180-amino-acid chain; its full sequence is Large ribosomal subunit protein uL6 (180 aa).

Belongs to the universal ribosomal protein uL6 family. In terms of assembly, part of the 50S ribosomal subunit.

In terms of biological role, this protein binds to the 23S rRNA, and is important in its secondary structure. It is located near the subunit interface in the base of the L7/L12 stalk, and near the tRNA binding site of the peptidyltransferase center. The protein is Large ribosomal subunit protein uL6 of Clostridium botulinum (strain Loch Maree / Type A3).